Here is a 964-residue protein sequence, read N- to C-terminus: DNA primase (964 aa).

The disordered stretch occupies residues Ser807–Asp844.

It belongs to the herpesviridae DNA primase family. Associates with the helicase and the primase-associated factor to form the helicase-primase factor.

It localises to the host nucleus. Essential component of the helicase/primase complex. Unwinds the DNA at the replication forks and generates single-stranded DNA for both leading and lagging strand synthesis. The primase initiates primer synthesis and thereby produces large amount of short RNA primers on the lagging strand that the polymerase elongates using dNTPs. This is DNA primase (UL70) from Mus musculus (Mouse).